The following is a 344-amino-acid chain: Phenylalanine--tRNA ligase alpha subunit (344 aa).

Mg(2+) is bound at residue glutamate 256.

This sequence belongs to the class-II aminoacyl-tRNA synthetase family. Phe-tRNA synthetase alpha subunit type 1 subfamily. In terms of assembly, tetramer of two alpha and two beta subunits. Mg(2+) is required as a cofactor.

It localises to the cytoplasm. The enzyme catalyses tRNA(Phe) + L-phenylalanine + ATP = L-phenylalanyl-tRNA(Phe) + AMP + diphosphate + H(+). The sequence is that of Phenylalanine--tRNA ligase alpha subunit from Oceanobacillus iheyensis (strain DSM 14371 / CIP 107618 / JCM 11309 / KCTC 3954 / HTE831).